The primary structure comprises 27 residues: uncharacterized protein (27 aa).

The protein resides in the plastid. The protein localises to the chloroplast. This is an uncharacterized protein from Anthoceros angustus (Hornwort).